A 216-amino-acid polypeptide reads, in one-letter code: uncharacterized protein (216 aa).

The chain crosses the membrane as a helical span at residues 5–25 (YVKALVAVTVALGVLLPSTIS). Low complexity-rich tracts occupy residues 28-67 (KSFS…SSSS) and 89-108 (KASS…ATSK). A disordered region spans residues 28–115 (KSFSGRSSSS…TSKVTGKTYS (88 aa)). The next 2 membrane-spanning stretches (helical) occupy residues 137–157 (GFAP…MFMI) and 183–203 (IAWI…IALI).

The protein localises to the cell membrane. This is an uncharacterized protein from Bacillus subtilis (strain 168).